The chain runs to 506 residues: MDMNTLLSLSWHLMVPEFIILGAAILLSICDLFFKLNHRYVALGAIAAVVLAIVSLITLYSEPAGDILNGSFVLDGFSKGFKTLLLGGAALILCTAMSDDKKNPIEDKGEYYYLFLMALLGAMFMASSVDFVTLFVGLELLSLSSYILVGIRKKNRASNEAAMKYVINGGIGTAITLFGMSYLYGITGSTNIVDMQKVFAGELASGIQLLLALAFLLLLVGLSFKIATVPFHMWAPDVYEGAATPVTAFLGTISKMAGFLLIIRLFLMVFASVSVQGDMQSLYGRMSIYIAVLASITMIIGNVVALKQYNVKRLFAYSGIAHAGYLLVPLVALSPFTMDSMWFYMLAYMLMNIGAFAIIHGLILQSNKENITIFTGLYKRSPFTAIVMTIFILSLAGIPGTAGFIGKINIFLGALHVEPAHYVLASIMMGTTVISFVYYFRILQQMFFRTGEVEEKIRLPLNIKIVMSFCAISIVILGIVPMIGYNFFYEYFPLMKDFFFLGNVVQ.

14 helical membrane-spanning segments follow: residues 14 to 34 (MVPE…DLFF), 40 to 60 (YVAL…ITLY), 72 to 92 (FVLD…AALI), 109 to 129 (GEYY…ASSV), 131 to 151 (FVTL…LVGI), 166 to 186 (VING…LYGI), 209 to 229 (LLLA…IATV), 256 to 276 (MAGF…VSVQ), 286 to 306 (MSIY…VVAL), 314 to 334 (LFAY…VALS), 343 to 363 (FYML…HGLI), 385 to 405 (AIVM…AGFI), 420 to 440 (AHYV…VYYF), and 465 to 485 (IVMS…MIGY).

It belongs to the complex I subunit 2 family. In terms of assembly, NDH-1 is composed of 14 different subunits. Subunits NuoA, H, J, K, L, M, N constitute the membrane sector of the complex.

The protein resides in the cell membrane. The enzyme catalyses a quinone + NADH + 5 H(+)(in) = a quinol + NAD(+) + 4 H(+)(out). NDH-1 shuttles electrons from NADH, via FMN and iron-sulfur (Fe-S) centers, to quinones in the respiratory chain. The immediate electron acceptor for the enzyme in this species is believed to be a menaquinone. Couples the redox reaction to proton translocation (for every two electrons transferred, four hydrogen ions are translocated across the cytoplasmic membrane), and thus conserves the redox energy in a proton gradient. The sequence is that of NADH-quinone oxidoreductase subunit N from Bacillus anthracis.